A 122-amino-acid polypeptide reads, in one-letter code: Movement protein TGB2 (122 aa).

The Cytoplasmic segment spans residues 1–12; it reads MVKSTVPTRPNK. Residues 13-33 traverse the membrane as a helical segment; that stretch reads YWPGVVAIGLVSLFIFLSVSN. The Lumenal segment spans residues 34–76; the sequence is QKHSTTSGDNIHKFSNGGTYRDGSKCITYNRNSPLAYNGSSSN. The helical transmembrane segment at 77-97 threads the bilayer; it reads NTLFWLCLLGLSMVWIAYCGY. The Cytoplasmic portion of the chain corresponds to 98–122; the sequence is KSLSGQWHSCQHDKNERNFLFECFE.

This sequence belongs to the virgaviridae/benyvirus TGB2 movement protein family. In terms of assembly, interacts with movement protein TGB3. TGB1-TGB3-TGB2 complex formation is enhanced by ATP hydrolysis.

The protein localises to the host cell junction. It localises to the host plasmodesma. The protein resides in the host endoplasmic reticulum membrane. Its subcellular location is the host cytoplasm. It is found in the host cytoskeleton. In terms of biological role, participates in the transport of viral genome to neighboring plant cells directly through plasmodesmata, without any budding. TGBp2 and TGBp3 are necessary for intracellular delivery of TGBp1-containing vRNPs to plasmodesmata. Can gate plasmodesmata and increase their size exclusion limit. To a lesser extent than TGB3, induces host actin cytoskeleton network thickening, which probably plays a major role in virus cell-to-cell movement. The protein is Movement protein TGB2 of Peanut clump virus (isolate 87/TGTA2) (PCV).